The primary structure comprises 366 residues: Histidinol-phosphate aminotransferase 2 (366 aa).

Residues 1-11 (MQVKDQLSSLQ) are compositionally biased toward polar residues. The segment at 1-21 (MQVKDQLSSLQPYKPGKSPEQ) is disordered. Lys-222 is subject to N6-(pyridoxal phosphate)lysine.

It belongs to the class-II pyridoxal-phosphate-dependent aminotransferase family. Histidinol-phosphate aminotransferase subfamily. In terms of assembly, homodimer. Requires pyridoxal 5'-phosphate as cofactor.

It carries out the reaction L-histidinol phosphate + 2-oxoglutarate = 3-(imidazol-4-yl)-2-oxopropyl phosphate + L-glutamate. The protein operates within amino-acid biosynthesis; L-histidine biosynthesis; L-histidine from 5-phospho-alpha-D-ribose 1-diphosphate: step 7/9. The sequence is that of Histidinol-phosphate aminotransferase 2 from Bacillus thuringiensis subsp. konkukian (strain 97-27).